A 210-amino-acid polypeptide reads, in one-letter code: Transcriptional regulator DauR (210 aa).

It belongs to the DauR family.

Its function is as follows. DauR represses the dauBAR operon. In Pseudomonas aeruginosa (strain ATCC 15692 / DSM 22644 / CIP 104116 / JCM 14847 / LMG 12228 / 1C / PRS 101 / PAO1), this protein is Transcriptional regulator DauR.